Reading from the N-terminus, the 795-residue chain is RalBP1-associated Eps domain-containing protein 1 (795 aa).

An EH 1 domain is found at 10–113; the sequence is EQKYYSDLFS…SKNEQESRLA (104 aa). The disordered stretch occupies residues 112–238; sequence LAASYSSDSE…NWVSFADTPP (127 aa). The segment covering 115-126 has biased composition (polar residues); sequence SYSSDSENQGSY. Serine 145, serine 162, serine 166, and serine 170 each carry phosphoserine. A compositionally biased stretch (low complexity) spans 156–168; sequence EQQEPVSPVVSPQ. Threonine 173 bears the Phosphothreonine mark. Low complexity predominate over residues 205–216; it reads GDAQAGSSAGDA. 2 positions are modified to phosphoserine: serine 272 and serine 273. Residues 285–374 form the EH 2 domain; sequence QRQYYVNQFK…ESLMPKLIDL (90 aa). Tyrosine 288 carries the post-translational modification Phosphotyrosine. Phosphoserine is present on serine 307. Residues 318–353 enclose the EF-hand domain; it reads LPILELSHIWELSDFDKDGALTLDEFCAAFHLVVAR. 4 residues coordinate Ca(2+): aspartate 331, aspartate 333, aspartate 335, and glutamate 342. Disordered stretches follow at residues 380–433 and 469–720; these read VGEQ…SSQT and ELKR…DEHT. Positions 407-433 are enriched in polar residues; it reads LNQTWPELNQSSEQWETFSERSSSSQT. 3 positions are modified to phosphoserine: serine 475, serine 482, and serine 489. Composition is skewed to polar residues over residues 497-518 and 525-542; these read INSS…SDSF and IGSS…SPDN. Serine 539 is modified (phosphoserine). Position 543 is a phosphothreonine (threonine 543). Positions 543-553 are enriched in pro residues; the sequence is TAPPPPPPRPQ. Position 561 is a phosphoserine (serine 561). The span at 562–573 shows a compositional bias: polar residues; that stretch reads LDMNRTFAVTTG. The span at 574 to 583 shows a compositional bias: low complexity; the sequence is QQQAGVVAHP. The segment covering 584–595 has biased composition (pro residues); the sequence is PAVPPRPQPSQA. Composition is skewed to polar residues over residues 611-622 and 681-692; these read THTSTSPQQIPE and ATNVPANVSKGT. Residues 651 to 795 are interaction with RALBP1; sequence HPEVLPAEKA…LEQLRPFSHL (145 aa). Over residues 707 to 720 the composition is skewed to basic and acidic residues; it reads KSEDELRPDVDEHT. Phosphoserine occurs at positions 708 and 739. A coiled-coil region spans residues 750-790; that stretch reads SIRRNKETNTVLARLNSELQQQLKDVLEERISLEVQLEQLR.

As to quaternary structure, homodimer (Potential). Interacts with RALBP1, CRK and GRB2. Binding to RALBP1 does not affect its Ral-binding activity. Forms a complex with the SH3 domains of CRK and GRB2 which may link it to an EGF-responsive tyrosine kinase. Interacts with RAB11FIP2. Interacts with AMPH, ITSN1 (via SH3 domains) and SGIP1; may be involved in clathrin-mediated endocytosis. Post-translationally, EGF stimulates phosphorylation on Tyr-residues. As to expression, expressed in all tissues examined. The highest level expression was found in the kidney and testis.

It localises to the membrane. It is found in the clathrin-coated pit. In terms of biological role, may coordinate the cellular actions of activated EGF receptors and Ral-GTPases. The protein is RalBP1-associated Eps domain-containing protein 1 (Reps1) of Mus musculus (Mouse).